The primary structure comprises 126 residues: Fluoride-specific ion channel FluC (126 aa).

The next 4 helical transmembrane spans lie at 4 to 24 (PLLS…FLGL), 33 to 53 (IPLG…FAMA), 67 to 87 (FVIT…IEIV), and 97 to 117 (MAML…CLGL). Na(+) is bound by residues Gly-74 and Thr-77.

This sequence belongs to the fluoride channel Fluc/FEX (TC 1.A.43) family.

The protein localises to the cell inner membrane. It catalyses the reaction fluoride(in) = fluoride(out). Na(+) is not transported, but it plays an essential structural role and its presence is essential for fluoride channel function. Fluoride-specific ion channel. Important for reducing fluoride concentration in the cell, thus reducing its toxicity. The chain is Fluoride-specific ion channel FluC from Acinetobacter baumannii (strain SDF).